The primary structure comprises 20 residues: Protease inhibitor (20 aa).

Monomer. Post-translationally, glycosylated. Stored in epidermis and secreted into the hemolymph and cuticle. Not detected in the interior of the epidermis, fat body cells or columnar or goblet cells of the midgut epithelium (at protein level).

Its function is as follows. Inhibits trypsin and chymotrypsin. This chain is Protease inhibitor, found in Antheraea mylitta (Tasar silkworm).